A 538-amino-acid chain; its full sequence is Cytochrome P450 monooxygenase claO (538 aa).

Helical transmembrane passes span 7–27 (IGAF…KLVG) and 222–242 (INPS…PILL). C475 is a binding site for heme.

This sequence belongs to the cytochrome P450 family. The cofactor is heme.

It is found in the membrane. Its pathway is secondary metabolite biosynthesis; terpenoid biosynthesis. Its function is as follows. Cytochrome P450 monooxygenase; part of the gene cluster that mediates the biosynthesis of clavilactone A, a meroterpenoid that features a unique benzo-fused ten-membered carbocyclic ring unit with an alpha,beta-epoxy-gamma-lactone moiety, forming an intriguing 10/5/3 tricyclic nested skeleton. Cytochrome P450 monooxygenases claO, claP, claQ, claU, and claW are close orthologs, suggesting that a redundant function or pseudogenes are present in the cla cluster. These monoxygenases are not involved in clavilactone A biosynthesis nor in its modification. ClaR, ClaS and ClaT are sufficient to produce clavilactone A. The biosynthesis begins with the prenyltransferase claS that transfers geranyl pyrophosphate (GPP) to hydroquinone to produces geranylhydroquinone. The cytochrome P450 monooxygenase claR then catalyzes the diradical coupling reaction between the intramolecular hydroquinone and allyl moieties to form the benzo-fused ten-membered carbocyclic ring unit of wigantol. Finally the cytochrome P450 monooxygenase claT exquisitely and stereoselectively assembles the alpha,beta-epoxy-gamma-lactone moiety, producing clavilactone A via arnebinol A. In Ampulloclitocybe clavipes (Club foot), this protein is Cytochrome P450 monooxygenase claO.